The following is a 467-amino-acid chain: Signal transduction histidine-protein kinase BaeS (467 aa).

Over 1–11 (MKFWRPGITGK) the chain is Cytoplasmic. Residues 12-32 (LFLAIFATCIVLLISMHWAVR) form a helical membrane-spanning segment. Residues 33 to 167 (ISFERGFIDY…NFDKQQRQTS (135 aa)) are Periplasmic-facing. The chain crosses the membrane as a helical span at residues 168–186 (WLIVALATLLAALATFLLA). The 53-residue stretch at 187 to 239 (RGLLAPVKRLVDGTHKLAAGDFTTRVTPTSEDELGKLAQDFNQLASTLEKNQQ) folds into the HAMP domain. Topologically, residues 187–467 (RGLLAPVKRL…PLERDLQREV (281 aa)) are cytoplasmic. Positions 247-461 (DISHELRTPL…SITVELPLER (215 aa)) constitute a Histidine kinase domain. The residue at position 250 (histidine 250) is a Phosphohistidine; by autocatalysis.

Post-translationally, autophosphorylated.

It localises to the cell inner membrane. The catalysed reaction is ATP + protein L-histidine = ADP + protein N-phospho-L-histidine.. Functionally, member of the two-component regulatory system BaeS/BaeR which responds to envelope stress. Activates expression of periplasmic chaperone spy in response to spheroplast formation, indole and P pili protein PapG overexpression. Activates BaeR by phosphorylation which then activates the mdtABCD and probably the CRISPR-Cas casABCDE-ygbT-ygbF operons. The sequence is that of Signal transduction histidine-protein kinase BaeS from Escherichia coli (strain K12).